The primary structure comprises 49 residues: Small ribosomal subunit protein eS31 (49 aa).

Zn(2+) is bound by residues Cys21, Cys24, Cys39, and Cys42. Residues 21-42 form a C4-type zinc finger; sequence CPRCGPGVFLADHKNRLACGKC.

Belongs to the eukaryotic ribosomal protein eS31 family. In terms of assembly, part of the 30S ribosomal subunit. Zn(2+) is required as a cofactor.

The chain is Small ribosomal subunit protein eS31 from Methanosarcina mazei (strain ATCC BAA-159 / DSM 3647 / Goe1 / Go1 / JCM 11833 / OCM 88) (Methanosarcina frisia).